Consider the following 689-residue polypeptide: SH3 domain-binding protein 1 (689 aa).

The span at 1–11 (MMKRQLHRMRQ) shows a compositional bias: basic residues. The tract at residues 1-24 (MMKRQLHRMRQLAHTGSSGRTPET) is disordered. An interaction with CGNL1 region spans residues 1-275 (MMKRQLHRMR…TAAPFSRVYG (275 aa)). The region spanning 17 to 262 (SSGRTPETAE…RDNHSQADSS (246 aa)) is the BAR domain. Ser241 and Ser262 each carry phosphoserine. The 194-residue stretch at 276–469 (VSLRTHLQDL…VLIQNADTLF (194 aa)) folds into the Rho-GAP domain. The segment at 470-689 (PGDINFSVSG…RPRGLISETD (220 aa)) is interaction with CD2AP. A disordered region spans residues 507 to 689 (TAATPTPTPA…RPRGLISETD (183 aa)). 2 positions are modified to phosphoserine: Ser539 and Ser545. Over residues 565 to 575 (PARPTMPPPQP) the composition is skewed to pro residues. The segment covering 576–594 (SSSRSSPPALSLPAGSVSP) has biased composition (low complexity). A Phosphoserine modification is found at Ser586. Thr596 is modified (phosphothreonine). The short motif at 611–620 (APTVPPPLPP) is the SH3-binding element. Over residues 613 to 625 (TVPPPLPPAPPQP) the composition is skewed to pro residues. Ser641 bears the Phosphoserine mark. Positions 670–680 (PPTPVLPPQPR) are enriched in pro residues.

As to quaternary structure, interacts with RAC1. Interacts with the exocyst via EXOC4 and EXOC8; required for the localization of both SH3BP1 and the exocyst to the leading edge of migrating cells. Interacts with CD2AP and CGNL1; probably part of a complex at cell junctions. Interacts with CAPZA1; recruits CAPZA1 to forming cell junctions. May interact with AFDN. Interacts with PLXND1; they dissociate upon SEMA3E binding to PLXND1 allowing SH3BP1 to transduce downstream signal through RAC1 inactivation. Interacts with ABL1, GRB2 and SRC (via SH3 domain).

Its subcellular location is the cell projection. The protein localises to the cell junction. It is found in the tight junction. It localises to the adherens junction. The protein resides in the phagocytic cup. Its subcellular location is the nucleus. The protein localises to the cytoplasm. It is found in the cytosol. Functionally, GTPase activating protein/GAP which specifically converts GTP-bound Rho-type GTPases including RAC1 and CDC42 in their inactive GDP-bound form. By specifically inactivating RAC1 at the leading edge of migrating cells, it regulates the spatiotemporal organization of cell protrusions which is important for proper cell migration. Also negatively regulates CDC42 in the process of actin remodeling and the formation of epithelial cell junctions. Through its GAP activity toward RAC1 and/or CDC42 plays a specific role in phagocytosis of large particles. Specifically recruited by a PI3 kinase/PI3K-dependent mechanism to sites of large particles engagement, inactivates RAC1 and/or CDC42 allowing the reorganization of the underlying actin cytoskeleton required for engulfment. It also plays a role in angiogenesis and the process of repulsive guidance as part of a semaphorin-plexin signaling pathway. Following the binding of PLXND1 to extracellular SEMA3E it dissociates from PLXND1 and inactivates RAC1, inducing the intracellular reorganization of the actin cytoskeleton and the collapse of cells. This is SH3 domain-binding protein 1 from Rattus norvegicus (Rat).